We begin with the raw amino-acid sequence, 371 residues long: N-acetyldiaminopimelate deacetylase (371 aa).

The active site involves D68. E127 serves as the catalytic Proton acceptor.

The protein belongs to the peptidase M20A family. N-acetyldiaminopimelate deacetylase subfamily.

It carries out the reaction N-acetyl-(2S,6S)-2,6-diaminopimelate + H2O = (2S,6S)-2,6-diaminopimelate + acetate. Its pathway is amino-acid biosynthesis; L-lysine biosynthesis via DAP pathway; LL-2,6-diaminopimelate from (S)-tetrahydrodipicolinate (acetylase route): step 3/3. In terms of biological role, catalyzes the conversion of N-acetyl-diaminopimelate to diaminopimelate and acetate. The sequence is that of N-acetyldiaminopimelate deacetylase from Listeria monocytogenes serotype 4a (strain HCC23).